A 619-amino-acid chain; its full sequence is Enolase 4 (619 aa).

Residues Asp-173–Glu-184 show a composition bias toward basic and acidic residues. The segment at Asp-173–His-236 is disordered. The span at Pro-188 to Pro-206 shows a compositional bias: pro residues. Glu-302 is a substrate binding site. The disordered stretch occupies residues Thr-333 to Pro-354. The Proton acceptor role is filled by Lys-497. A substrate-binding site is contributed by Lys-548.

Belongs to the enolase family. In terms of assembly, interacts with ENO1. Isoform 1 and isoform 4 interact with AKAP4. Post-translationally, synthesized as an approximately 70-kDa precursor, which then undergoes proteolytic cleavage to an approximately 60-kDa enzyme; HOATZ associates directly or indirectly with ENO4 to mediate this process before its transport to mature flagella. As to expression, testis-specific. Expressed in spermatids and ependyma (at protein level). Expressed at higher levels in late spermatids than in pachytene spermatocytes. In terms of tissue distribution, expressed at higher levels in pachytene spermatocytes than in late spermatids.

It carries out the reaction (2R)-2-phosphoglycerate = phosphoenolpyruvate + H2O. Its pathway is carbohydrate degradation; glycolysis; pyruvate from D-glyceraldehyde 3-phosphate: step 4/5. Its function is as follows. Required for sperm motility, function and male fertility. May be involved in the normal assembly of the sperm fibrous sheath and provides most of the enolase activity in sperm. In Mus musculus (Mouse), this protein is Enolase 4 (Eno4).